Reading from the N-terminus, the 408-residue chain is Probable ethanolamine permease EutH (408 aa).

11 helical membrane passes run 1–21 (MGINEIIMYIMMFFMLIAAVD), 61–81 (AMVGMTALAPVLAHVLGPVII), 89–109 (ANPSMFAGTLLACDMGGFFLA), 126–146 (ILGSMMGPTIVFSIPVALGII), 155–175 (ALGVLAGIVTIPIGCIAGGLI), 192–212 (FALILMNMIPVLIVAVLVALG), 230–250 (FLVALITIGLAAAVVKFLLGW), 274–294 (IEVIGSISCVLLGAYPMVLLL), 313–333 (NIAAAGMVATLANNIPMFGMM), 342–362 (VINCAFAVSAAFALGDHLGFA), and 369–389 (MIFPMIVGKLIGGVTAIGVAM).

It belongs to the EutH family.

The protein localises to the cell inner membrane. The catalysed reaction is ethanolamine(in) = ethanolamine(out). It participates in amine and polyamine degradation; ethanolamine degradation. In terms of biological role, probably involved in the diffusion of protonated ethanolamine (EA) into the cell at low pH. At low pH most EA is protonated, and this permease becomes necessary. Contributes to bacterial survival and replication in acidified macrophage vacuoles, but not to bacterial uptake by macrophages. Expression of the eut operon allows this bacteria to use ethanolamine (EA) as a carbon, nitrogen and energy source. It relies on cobalamin (vitamin B12) both as a cofactor for the ethanolamine ammonia-lyase (EAL) activity and to induce the operon. EA enhances bacterial survival in macrophages in a concentration-dependent manner, suggesting it is an important nutrient during infection. The polypeptide is Probable ethanolamine permease EutH (Salmonella typhimurium (strain LT2 / SGSC1412 / ATCC 700720)).